A 297-amino-acid polypeptide reads, in one-letter code: Homoserine kinase (297 aa).

Residue 82 to 92 (PVSRGLGSSAA) participates in ATP binding.

Belongs to the GHMP kinase family. Homoserine kinase subfamily.

Its subcellular location is the cytoplasm. The catalysed reaction is L-homoserine + ATP = O-phospho-L-homoserine + ADP + H(+). It participates in amino-acid biosynthesis; L-threonine biosynthesis; L-threonine from L-aspartate: step 4/5. Its function is as follows. Catalyzes the ATP-dependent phosphorylation of L-homoserine to L-homoserine phosphate. In Clostridium botulinum (strain Okra / Type B1), this protein is Homoserine kinase.